Reading from the N-terminus, the 388-residue chain is P2X purinoceptor 4 (388 aa).

At 1–33 (MAGCCAALAAFLFEYDTPRIVLIRSRKVGLMNR) the chain is on the cytoplasmic side. A helical transmembrane segment spans residues 34 to 54 (AVQLLILAYVIGWVFVWEKGY). Over 55-338 (QETDSVVSSV…KFDIIPTMIN (284 aa)) the chain is Extracellular. 2 residues coordinate ATP: Lys-67 and Lys-69. The CTP site is built by Lys-67 and Lys-69. N-linked (GlcNAc...) asparagine glycans are attached at residues Asn-75 and Asn-110. Intrachain disulfides connect Cys-116–Cys-165, Cys-126–Cys-149, and Cys-132–Cys-159. 2 N-linked (GlcNAc...) asparagine glycosylation sites follow: Asn-153 and Asn-184. Thr-186 and Leu-188 together coordinate ATP. Thr-186 contacts CTP. N-linked (GlcNAc...) asparagine glycosylation is found at Asn-199 and Asn-208. 2 disulfides stabilise this stretch: Cys-217/Cys-227 and Cys-261/Cys-270. Asn-293, Arg-295, and Lys-313 together coordinate ATP. Residues Asn-293, Arg-295, and Lys-313 each contribute to the CTP site. The helical transmembrane segment at 339 to 359 (IGSGLALLGMATVLCDIIVLY) threads the bilayer. Over 360-388 (CMKKRLYYREKKYKYVEDYEQGLASELDQ) the chain is Cytoplasmic.

Belongs to the P2X receptor family. In terms of assembly, functional P2RXs are organized as homomeric and heteromeric trimers. Forms heterotrimer with P2RX1. Interacts with P2RX7 (via C-terminus); this interaction is functional only in the presence of ATP. Forms heterotrimer with P2RX4; functional differences between homomeric P2RX4 and P2RX4/6 heterotrimer are minor. Interacts with AP1M2.

It localises to the cell membrane. It is found in the lysosome membrane. The enzyme catalyses K(+)(in) = K(+)(out). It carries out the reaction Na(+)(in) = Na(+)(out). The catalysed reaction is Ca(2+)(in) = Ca(2+)(out). Activated by ATP. pH-dependent and inhibited by acidic pH. In terms of biological role, ATP-gated nonselective transmembrane cation channel permeable to potassium, sodium and calcium. CTP, but not GTP or UTP, functions as a weak affinity agonist for P2RX4. Activated by extracellularly released ATP, it plays multiple role in immunity and central nervous system physiology. Plays a key role in initial steps of T-cell activation and Ca(2+) microdomain formation. Also participates in basal T-cell activity without TCR/CD3 stimulation. Promotes the differentiation and activation of Th17 cells via expression of retinoic acid-related orphan receptor C/RORC. Upon activation, drives microglia motility via the PI3K/Akt pathway. Could also function as an ATP-gated cation channel of lysosomal membranes. This is P2X purinoceptor 4 (P2RX4) from Homo sapiens (Human).